The sequence spans 204 residues: Isochorismatase domain-containing protein 2 (204 aa).

This sequence belongs to the isochorismatase family. In terms of assembly, interacts with CDKN2A.

The protein resides in the cytoplasm. Its subcellular location is the nucleus. The polypeptide is Isochorismatase domain-containing protein 2 (ISOC2) (Bos taurus (Bovine)).